A 178-amino-acid chain; its full sequence is uncharacterized protein (178 aa).

This is an uncharacterized protein from Escherichia coli (strain K12).